The chain runs to 293 residues: Sec-independent protein translocase protein TatC (293 aa).

6 helical membrane passes run 35 to 55, 87 to 107, 123 to 143, 173 to 193, 204 to 224, and 228 to 248; these read AAIA…QPFI, LLKV…LYQA, LFGF…ISYF, ILKF…LVGI, ILKS…LTAP, and IMMM…AIGI.

The protein belongs to the TatC family. The Tat system comprises two distinct complexes: a TatABC complex, containing multiple copies of TatA, TatB and TatC subunits, and a separate TatA complex, containing only TatA subunits. Substrates initially bind to the TatABC complex, which probably triggers association of the separate TatA complex to form the active translocon.

It localises to the cell membrane. Functionally, part of the twin-arginine translocation (Tat) system that transports large folded proteins containing a characteristic twin-arginine motif in their signal peptide across membranes. Together with TatB, TatC is part of a receptor directly interacting with Tat signal peptides. This Rothia mucilaginosa (strain DY-18) (Stomatococcus mucilaginosus) protein is Sec-independent protein translocase protein TatC.